The sequence spans 397 residues: Tyrosine--tRNA ligase (397 aa).

Positions 39–48 (PTAPDLHLGH) match the 'HIGH' region motif. A 'KMSKS' region motif is present at residues 223-227 (KMSKS). K226 is an ATP binding site. The S4 RNA-binding domain maps to 334–395 (YPIANLVHDL…GKRKFAKIRL (62 aa)).

The protein belongs to the class-I aminoacyl-tRNA synthetase family. TyrS type 2 subfamily. As to quaternary structure, homodimer.

It is found in the cytoplasm. The enzyme catalyses tRNA(Tyr) + L-tyrosine + ATP = L-tyrosyl-tRNA(Tyr) + AMP + diphosphate + H(+). Functionally, catalyzes the attachment of tyrosine to tRNA(Tyr) in a two-step reaction: tyrosine is first activated by ATP to form Tyr-AMP and then transferred to the acceptor end of tRNA(Tyr). This is Tyrosine--tRNA ligase from Methylococcus capsulatus (strain ATCC 33009 / NCIMB 11132 / Bath).